We begin with the raw amino-acid sequence, 136 residues long: Frataxin, mitochondrial (136 aa).

Belongs to the frataxin family. In terms of assembly, monomer. Oligomer.

The protein resides in the mitochondrion. It catalyses the reaction 4 Fe(2+) + O2 + 4 H(+) = 4 Fe(3+) + 2 H2O. Promotes the biosynthesis of heme as well as the assembly and repair of iron-sulfur clusters by delivering Fe(2+) to proteins involved in these pathways. May play a role in the protection against iron-catalyzed oxidative stress through its ability to catalyze the oxidation of Fe(2+) to Fe(3+). May be able to store large amounts of the metal in the form of a ferrihydrite mineral by oligomerization. The protein is Frataxin, mitochondrial (frh-1) of Caenorhabditis elegans.